A 38-amino-acid polypeptide reads, in one-letter code: MARPNPNKQVVELNRTSLYWGLLLIFVLAVLFSSYIFN.

Residues 17 to 37 form a helical membrane-spanning segment; sequence SLYWGLLLIFVLAVLFSSYIF.

Belongs to the PsbL family. In terms of assembly, PSII is composed of 1 copy each of membrane proteins PsbA, PsbB, PsbC, PsbD, PsbE, PsbF, PsbH, PsbI, PsbJ, PsbK, PsbL, PsbM, PsbT, PsbX, PsbY, PsbZ, Psb30/Ycf12, at least 3 peripheral proteins of the oxygen-evolving complex and a large number of cofactors. It forms dimeric complexes.

It localises to the plastid. The protein resides in the chloroplast thylakoid membrane. In terms of biological role, one of the components of the core complex of photosystem II (PSII). PSII is a light-driven water:plastoquinone oxidoreductase that uses light energy to abstract electrons from H(2)O, generating O(2) and a proton gradient subsequently used for ATP formation. It consists of a core antenna complex that captures photons, and an electron transfer chain that converts photonic excitation into a charge separation. This subunit is found at the monomer-monomer interface and is required for correct PSII assembly and/or dimerization. This is Photosystem II reaction center protein L from Tetradesmus obliquus (Green alga).